Reading from the N-terminus, the 453-residue chain is Bifunctional protein GlmU (453 aa).

The pyrophosphorylase stretch occupies residues 1 to 226; that stretch reads MKFSAVILAA…AIEVEGVNDR (226 aa). UDP-N-acetyl-alpha-D-glucosamine contacts are provided by residues 8–11, lysine 22, glutamine 73, 78–79, 100–102, glycine 137, glutamate 151, asparagine 166, and asparagine 224; these read LAAG, GT, and YGD. Aspartate 102 is a binding site for Mg(2+). Asparagine 224 provides a ligand contact to Mg(2+). Residues 227 to 247 are linker; the sequence is AQLARLERAFQSMQAQKLLEQ. An N-acetyltransferase region spans residues 248–453; sequence GVMLRDPARF…TGWQRPVKQK (206 aa). Residues arginine 330 and lysine 348 each contribute to the UDP-N-acetyl-alpha-D-glucosamine site. Histidine 360 (proton acceptor) is an active-site residue. Positions 363 and 374 each coordinate UDP-N-acetyl-alpha-D-glucosamine. Residues alanine 377, 383–384, serine 402, alanine 420, and arginine 437 each bind acetyl-CoA; that span reads NY.

In the N-terminal section; belongs to the N-acetylglucosamine-1-phosphate uridyltransferase family. It in the C-terminal section; belongs to the transferase hexapeptide repeat family. In terms of assembly, homotrimer. The cofactor is Mg(2+).

The protein resides in the cytoplasm. It catalyses the reaction alpha-D-glucosamine 1-phosphate + acetyl-CoA = N-acetyl-alpha-D-glucosamine 1-phosphate + CoA + H(+). It carries out the reaction N-acetyl-alpha-D-glucosamine 1-phosphate + UTP + H(+) = UDP-N-acetyl-alpha-D-glucosamine + diphosphate. Its pathway is nucleotide-sugar biosynthesis; UDP-N-acetyl-alpha-D-glucosamine biosynthesis; N-acetyl-alpha-D-glucosamine 1-phosphate from alpha-D-glucosamine 6-phosphate (route II): step 2/2. The protein operates within nucleotide-sugar biosynthesis; UDP-N-acetyl-alpha-D-glucosamine biosynthesis; UDP-N-acetyl-alpha-D-glucosamine from N-acetyl-alpha-D-glucosamine 1-phosphate: step 1/1. It participates in bacterial outer membrane biogenesis; LPS lipid A biosynthesis. Its function is as follows. Catalyzes the last two sequential reactions in the de novo biosynthetic pathway for UDP-N-acetylglucosamine (UDP-GlcNAc). The C-terminal domain catalyzes the transfer of acetyl group from acetyl coenzyme A to glucosamine-1-phosphate (GlcN-1-P) to produce N-acetylglucosamine-1-phosphate (GlcNAc-1-P), which is converted into UDP-GlcNAc by the transfer of uridine 5-monophosphate (from uridine 5-triphosphate), a reaction catalyzed by the N-terminal domain. The sequence is that of Bifunctional protein GlmU from Vibrio parahaemolyticus serotype O3:K6 (strain RIMD 2210633).